The sequence spans 79 residues: Acyl carrier protein (79 aa).

The region spanning Ser2–Ser77 is the Carrier domain. The residue at position 37 (Ser37) is an O-(pantetheine 4'-phosphoryl)serine.

It belongs to the acyl carrier protein (ACP) family. In terms of processing, 4'-phosphopantetheine is transferred from CoA to a specific serine of apo-ACP by AcpS. This modification is essential for activity because fatty acids are bound in thioester linkage to the sulfhydryl of the prosthetic group.

It localises to the cytoplasm. It participates in lipid metabolism; fatty acid biosynthesis. Functionally, carrier of the growing fatty acid chain in fatty acid biosynthesis. This is Acyl carrier protein from Methylobacterium radiotolerans (strain ATCC 27329 / DSM 1819 / JCM 2831 / NBRC 15690 / NCIMB 10815 / 0-1).